The following is a 426-amino-acid chain: Glutamyl-tRNA reductase (426 aa).

Substrate is bound by residues 49-52 (TCNR), Ser109, 114-116 (EGQ), and Gln120. Cys50 (nucleophile) is an active-site residue. 189–194 (GAGETG) contacts NADP(+).

It belongs to the glutamyl-tRNA reductase family. Homodimer.

The catalysed reaction is (S)-4-amino-5-oxopentanoate + tRNA(Glu) + NADP(+) = L-glutamyl-tRNA(Glu) + NADPH + H(+). It participates in porphyrin-containing compound metabolism; protoporphyrin-IX biosynthesis; 5-aminolevulinate from L-glutamyl-tRNA(Glu): step 1/2. In terms of biological role, catalyzes the NADPH-dependent reduction of glutamyl-tRNA(Glu) to glutamate 1-semialdehyde (GSA). This is Glutamyl-tRNA reductase (hemA) from Chlorobaculum parvum (strain DSM 263 / NCIMB 8327) (Chlorobium vibrioforme subsp. thiosulfatophilum).